Reading from the N-terminus, the 129-residue chain is Small ribosomal subunit protein uS11 (129 aa).

Belongs to the universal ribosomal protein uS11 family. In terms of assembly, part of the 30S ribosomal subunit. Interacts with proteins S7 and S18. Binds to IF-3.

Functionally, located on the platform of the 30S subunit, it bridges several disparate RNA helices of the 16S rRNA. Forms part of the Shine-Dalgarno cleft in the 70S ribosome. This chain is Small ribosomal subunit protein uS11, found in Azoarcus sp. (strain BH72).